A 483-amino-acid chain; its full sequence is Cytochrome P450 71A23 (483 aa).

A helical transmembrane segment spans residues 1-21 (MILFLCLIILFIITILFFKKH). C429 lines the heme pocket.

The protein belongs to the cytochrome P450 family. It depends on heme as a cofactor.

Its subcellular location is the membrane. The protein is Cytochrome P450 71A23 (CYP71A23) of Arabidopsis thaliana (Mouse-ear cress).